Here is a 697-residue protein sequence, read N- to C-terminus: Elongation factor G (697 aa).

In terms of domain architecture, tr-type G spans 10-285 (AKTRNIGIMA…GVIDYLPSPL (276 aa)). GTP-binding positions include 19–26 (AHIDAGKT), 83–87 (DTPGH), and 137–140 (NKMD).

The protein belongs to the TRAFAC class translation factor GTPase superfamily. Classic translation factor GTPase family. EF-G/EF-2 subfamily.

The protein resides in the cytoplasm. Its function is as follows. Catalyzes the GTP-dependent ribosomal translocation step during translation elongation. During this step, the ribosome changes from the pre-translocational (PRE) to the post-translocational (POST) state as the newly formed A-site-bound peptidyl-tRNA and P-site-bound deacylated tRNA move to the P and E sites, respectively. Catalyzes the coordinated movement of the two tRNA molecules, the mRNA and conformational changes in the ribosome. The sequence is that of Elongation factor G from Lactobacillus acidophilus (strain ATCC 700396 / NCK56 / N2 / NCFM).